Reading from the N-terminus, the 496-residue chain is Glycerol kinase (496 aa).

Thr-12 is an ADP binding site. Residues Thr-12, Thr-13, and Ser-14 each contribute to the ATP site. Thr-12 contacts sn-glycerol 3-phosphate. An ADP-binding site is contributed by Arg-16. The sn-glycerol 3-phosphate site is built by Arg-82, Glu-83, and Tyr-134. Arg-82, Glu-83, and Tyr-134 together coordinate glycerol. The residue at position 230 (His-230) is a Phosphohistidine; by HPr. Asp-244 contributes to the sn-glycerol 3-phosphate binding site. Glycerol is bound by residues Asp-244 and Gln-245. ADP contacts are provided by Thr-266 and Gly-309. ATP is bound by residues Thr-266, Gly-309, Gln-313, and Gly-410. ADP-binding residues include Gly-410 and Asn-414.

The protein belongs to the FGGY kinase family. As to quaternary structure, homotetramer and homodimer (in equilibrium). The phosphoenolpyruvate-dependent sugar phosphotransferase system (PTS), including enzyme I, and histidine-containing protein (HPr) are required for the phosphorylation, which leads to the activation of the enzyme.

The catalysed reaction is glycerol + ATP = sn-glycerol 3-phosphate + ADP + H(+). It functions in the pathway polyol metabolism; glycerol degradation via glycerol kinase pathway; sn-glycerol 3-phosphate from glycerol: step 1/1. Activated by phosphorylation and inhibited by fructose 1,6-bisphosphate (FBP). Functionally, key enzyme in the regulation of glycerol uptake and metabolism. Catalyzes the phosphorylation of glycerol to yield sn-glycerol 3-phosphate. The protein is Glycerol kinase of Bacillus cereus (strain Q1).